The chain runs to 481 residues: UDP-glycosyltransferase 72B3 (481 aa).

UDP-alpha-D-glucose-binding positions include Ser-277, 347 to 349, 364 to 372, and 386 to 389; these read APQ, HCGWNSSLE, and YAEQ.

Belongs to the UDP-glycosyltransferase family.

In terms of biological role, possesses low quercetin 3-O-glucosyltransferase activity in vitro. This Arabidopsis thaliana (Mouse-ear cress) protein is UDP-glycosyltransferase 72B3 (UGT72B3).